Reading from the N-terminus, the 791-residue chain is Ataxin-2 homolog (791 aa).

Polar residues predominate over residues Met1–Gln22. Disordered stretches follow at residues Met1 to Ser28, Arg60 to Val100, Arg112 to Leu134, Thr235 to Gln311, Ser326 to Gly423, Lys452 to Ser505, Asn613 to Ser634, and Pro707 to Pro791. The span at Ser76–Ser96 shows a compositional bias: low complexity. 2 stretches are compositionally biased toward basic and acidic residues: residues Arg112–Pro125 and Asn243–His256. Polar residues predominate over residues Ser326 to Ser337. Composition is skewed to basic and acidic residues over residues Asp360–Lys371 and Ser395–Thr418. The span at Ser473 to Ser486 shows a compositional bias: low complexity. Positions Asn487 to Val497 are enriched in polar residues. 2 stretches are compositionally biased toward low complexity: residues Ser715–Asn725 and Asn734–Ala760. Over residues Asp774–Pro791 the composition is skewed to basic and acidic residues.

It belongs to the ataxin-2 family. In terms of assembly, interacts with mkt1.

The protein localises to the cytoplasm. Functionally, involved in post-transcriptional regulation of gene expression, probably by association with mkt1. The chain is Ataxin-2 homolog from Schizosaccharomyces pombe (strain 972 / ATCC 24843) (Fission yeast).